We begin with the raw amino-acid sequence, 318 residues long: Aspartate carbamoyltransferase catalytic subunit (318 aa).

Carbamoyl phosphate contacts are provided by Arg-58 and Thr-59. Position 86 (Lys-86) interacts with L-aspartate. Residues Arg-108, His-141, and Gln-144 each contribute to the carbamoyl phosphate site. Residues Arg-174 and Arg-226 each coordinate L-aspartate. The carbamoyl phosphate site is built by Gly-270 and Pro-271.

Belongs to the aspartate/ornithine carbamoyltransferase superfamily. ATCase family. In terms of assembly, heterododecamer (2C3:3R2) of six catalytic PyrB chains organized as two trimers (C3), and six regulatory PyrI chains organized as three dimers (R2).

It carries out the reaction carbamoyl phosphate + L-aspartate = N-carbamoyl-L-aspartate + phosphate + H(+). The protein operates within pyrimidine metabolism; UMP biosynthesis via de novo pathway; (S)-dihydroorotate from bicarbonate: step 2/3. In terms of biological role, catalyzes the condensation of carbamoyl phosphate and aspartate to form carbamoyl aspartate and inorganic phosphate, the committed step in the de novo pyrimidine nucleotide biosynthesis pathway. This is Aspartate carbamoyltransferase catalytic subunit from Lactobacillus helveticus (strain DPC 4571).